The primary structure comprises 93 residues: Small ribosomal subunit protein uS19 (93 aa).

The protein belongs to the universal ribosomal protein uS19 family.

In terms of biological role, protein S19 forms a complex with S13 that binds strongly to the 16S ribosomal RNA. The sequence is that of Small ribosomal subunit protein uS19 from Renibacterium salmoninarum (strain ATCC 33209 / DSM 20767 / JCM 11484 / NBRC 15589 / NCIMB 2235).